The sequence spans 212 residues: 3-demethoxyubiquinol 3-hydroxylase (212 aa).

Residues 21–42 (SRMSRPLPVPQESAVTEAAPEL) are disordered. Residues Glu61, Glu91, His94, Glu143, Glu175, and His178 each contribute to the Fe cation site.

The protein belongs to the COQ7 family. It depends on Fe cation as a cofactor.

The protein resides in the cell membrane. The enzyme catalyses a 5-methoxy-2-methyl-3-(all-trans-polyprenyl)benzene-1,4-diol + AH2 + O2 = a 3-demethylubiquinol + A + H2O. It functions in the pathway cofactor biosynthesis; ubiquinone biosynthesis. Catalyzes the hydroxylation of 2-nonaprenyl-3-methyl-6-methoxy-1,4-benzoquinol during ubiquinone biosynthesis. The sequence is that of 3-demethoxyubiquinol 3-hydroxylase from Paraburkholderia xenovorans (strain LB400).